We begin with the raw amino-acid sequence, 352 residues long: Schlafen-like protein 4 (352 aa).

An SLFN-like fold region spans residues 87-235 (FEYQSNFSEV…SDKVYQISSG (149 aa)). The chain crosses the membrane as a helical span at residues 326–343 (IQNIGWIFFGTALSCCIY).

It belongs to the Schlafen family. In terms of assembly, component of the PUCH (precursor of 21U RNA 5'-end cleavage holoenzyme) complex; consisting of tofu-1, tofu-2 and either slfl-3 or slfl-4.

Its subcellular location is the membrane. Functionally, component of the trimeric PUCH (precursor of 21U RNA 5'-end cleavage holoenzyme) complex, that acts as an endoribonuclease processing the 5'-end of precursor Piwi-interacting RNAs (piRNAs). The PUCH complex consists of tofu-1, tofu-2 and either slfl-3 or slfl-4, where tofu-2 exhibits endoribonuclease activity. PUCH-mediated processing strictly requires a 7-methyl-G cap (m7 G-cap) and an uracil at position three (U3). PUCH also exhibits a strict bias for piRNA precursors with an A or G at position 1. Mature piRNA production is enhanced by the interaction of PUCH with the PETISCO complex, which is stabilizing piRNA precursors and allows their processing by PUCH. The protein is Schlafen-like protein 4 of Caenorhabditis elegans.